Reading from the N-terminus, the 204-residue chain is Somatotropin (204 aa).

The N-terminal stretch at 1-17 (MDRAILLLSVLSVGVSS) is a signal peptide. Gln18 is subject to Pyrrolidone carboxylic acid. His35 serves as a coordination point for Zn(2+). Cysteines 69 and 177 form a disulfide. Glu186 serves as a coordination point for Zn(2+). Cys194 and Cys202 are disulfide-bonded.

This sequence belongs to the somatotropin/prolactin family.

It localises to the secreted. Functionally, growth hormone plays an important role in growth control and is involved in the regulation of several anabolic processes. Implicated as an osmoregulatory substance important for seawater adaptation. In Dicentrarchus labrax (European seabass), this protein is Somatotropin (gh).